Consider the following 788-residue polypeptide: Protein translocase subunit SecA 2 (788 aa).

ATP-binding positions include Gln-86, 104–108, and Asp-493; that span reads GEGKT.

This sequence belongs to the SecA family. In terms of assembly, monomer and homodimer. Part of the essential Sec protein translocation apparatus which comprises SecA, SecYEG and auxiliary proteins SecDF. Other proteins may also be involved.

The protein localises to the cell membrane. The protein resides in the cytoplasm. It catalyses the reaction ATP + H2O + cellular proteinSide 1 = ADP + phosphate + cellular proteinSide 2.. Part of the Sec protein translocase complex. Interacts with the SecYEG preprotein conducting channel. Has a central role in coupling the hydrolysis of ATP to the transfer of proteins into and across the cell membrane, serving as an ATP-driven molecular motor driving the stepwise translocation of polypeptide chains across the membrane. The sequence is that of Protein translocase subunit SecA 2 from Bacillus thuringiensis (strain Al Hakam).